A 276-amino-acid chain; its full sequence is BES1/BZR1 homolog protein 1 (276 aa).

Disordered regions lie at residues 1–30 (MTAS…RERR), 76–125 (TTYR…PTRF), and 155–191 (SAPV…PTRR). The tract at residues 14-87 (RMPTWKEREN…YRKGSRPTET (74 aa)) is required for DNA-binding. Residues 84-103 (PTETTVPCSSIQLSPQSSAF) show a composition bias toward polar residues. Low complexity predominate over residues 104–122 (QSPIPSYQASPSSSSYPSP). Threonine 159 bears the Phosphothreonine mark. Residues 164-174 (SPRRSNPRLPR) are compositionally biased toward low complexity. Polar residues predominate over residues 175 to 189 (WQSSNFPVSAPSSPT).

It belongs to the BZR/LAT61 family. In terms of processing, phosphorylated. Phosphorylation increases protein degradation.

The polypeptide is BES1/BZR1 homolog protein 1 (BEH1) (Arabidopsis thaliana (Mouse-ear cress)).